A 212-amino-acid polypeptide reads, in one-letter code: Cell division protein SepF (212 aa).

The disordered stretch occupies residues 32-104 (RYADPDTSYD…APLGSDAHRE (73 aa)). Positions 64-73 (EAEEDGGDYG) are enriched in acidic residues.

Belongs to the SepF family. In terms of assembly, homodimer. Interacts with FtsZ.

The protein localises to the cytoplasm. In terms of biological role, cell division protein that is part of the divisome complex and is recruited early to the Z-ring. Probably stimulates Z-ring formation, perhaps through the cross-linking of FtsZ protofilaments. Its function overlaps with FtsA. The chain is Cell division protein SepF from Saccharopolyspora erythraea (strain ATCC 11635 / DSM 40517 / JCM 4748 / NBRC 13426 / NCIMB 8594 / NRRL 2338).